The sequence spans 200 residues: Polyadenylate-binding protein 1-like 2 (200 aa).

2 consecutive RRM domains span residues 2–80 (ASLY…WSQR) and 90–166 (GNVF…RFKS). Positions 170-200 (REAERGAWARQSTSADVKDFEEDTDEEATLR) are disordered. A compositionally biased stretch (acidic residues) spans 188–200 (DFEEDTDEEATLR).

The protein is Polyadenylate-binding protein 1-like 2 (PABPC1L2A) of Homo sapiens (Human).